The chain runs to 183 residues: UPF0725 protein At4g11700 (183 aa).

This sequence belongs to the UPF0725 (EMB2204) family.

The polypeptide is UPF0725 protein At4g11700 (Arabidopsis thaliana (Mouse-ear cress)).